Here is a 251-residue protein sequence, read N- to C-terminus: Triosephosphate isomerase (251 aa).

Residue 9 to 11 (NWK) coordinates substrate. The Electrophile role is filled by His95. Glu167 functions as the Proton acceptor in the catalytic mechanism. Substrate is bound by residues Gly173, Ser213, and 234–235 (GG). At Ser213 the chain carries Phosphoserine.

This sequence belongs to the triosephosphate isomerase family. As to quaternary structure, homodimer.

It is found in the cytoplasm. It catalyses the reaction D-glyceraldehyde 3-phosphate = dihydroxyacetone phosphate. It participates in carbohydrate biosynthesis; gluconeogenesis. Its pathway is carbohydrate degradation; glycolysis; D-glyceraldehyde 3-phosphate from glycerone phosphate: step 1/1. Involved in the gluconeogenesis. Catalyzes stereospecifically the conversion of dihydroxyacetone phosphate (DHAP) to D-glyceraldehyde-3-phosphate (G3P). This is Triosephosphate isomerase from Bacillus cereus (strain AH820).